Reading from the N-terminus, the 470-residue chain is Glucose-1-phosphate adenylyltransferase large subunit 1 (470 aa).

The protein belongs to the bacterial/plant glucose-1-phosphate adenylyltransferase family. Heterotetramer. Prominently expressed in the leaves and a weaker expression is seen in the tubers.

It localises to the plastid. The protein resides in the chloroplast. It is found in the amyloplast. It catalyses the reaction alpha-D-glucose 1-phosphate + ATP + H(+) = ADP-alpha-D-glucose + diphosphate. Its pathway is glycan biosynthesis; starch biosynthesis. Activated by 3'phosphoglycerate, inhibited by orthophosphate. Allosteric regulation. Functionally, this protein plays a role in synthesis of starch. It catalyzes the synthesis of the activated glycosyl donor, ADP-glucose from Glc-1-P and ATP. The sequence is that of Glucose-1-phosphate adenylyltransferase large subunit 1 (AGPS1) from Solanum tuberosum (Potato).